Consider the following 355-residue polypeptide: Peptide chain release factor 1 (355 aa).

Glutamine 233 is modified (N5-methylglutamine). The span at 280 to 293 shows a compositional bias: basic and acidic residues; it reads ERRKKEQERADSRR. The tract at residues 280 to 306 is disordered; that stretch reads ERRKKEQERADSRRGQVGSGNRSERIR.

It belongs to the prokaryotic/mitochondrial release factor family. Methylated by PrmC. Methylation increases the termination efficiency of RF1.

It is found in the cytoplasm. Functionally, peptide chain release factor 1 directs the termination of translation in response to the peptide chain termination codons UAG and UAA. This is Peptide chain release factor 1 from Rickettsia africae (strain ESF-5).